Here is a 745-residue protein sequence, read N- to C-terminus: Junction plakoglobin (745 aa).

Position 1 is an N-acetylmethionine (M1). The O-linked (GlcNAc) threonine glycan is linked to T14. Residues S99 and S125 each carry the phosphoserine modification. ARM repeat units lie at residues 132-171 (NYQD…QLSK), 172-215 (KEAS…LSHH), 216-255 (REGL…NLLL), 258-297 (EGAK…LLAY), 298-341 (GNQE…LSVC), 342-381 (PSNK…NLSD), 383-420 (ATKQ…NLTC), 423-464 (SKNK…HLTS), 470-510 (EMAQ…NLAL), 512-551 (PANH…QPYT), 574-613 (PMNR…ELAQ), and 615-661 (KEAA…PDYR). Positions 132-297 (NYQDDAELAT…TTDCLQLLAY (166 aa)) are interaction with DSC1 and DSG1. S182 bears the Phosphoserine mark. An interaction with DSC1 region spans residues 574–661 (PMNRMEIFRL…ISEDKNPDYR (88 aa)). Phosphoserine occurs at positions 665 and 730.

The protein belongs to the beta-catenin family. In terms of assembly, homodimer. Component of an E-cadherin/catenin adhesion complex composed of at least E-cadherin/CDH1 and gamma-catenin/JUP, and possibly alpha-catenin/CTNNA1; the complex is located to adherens junctions. The stable association of CTNNA1 is controversial as CTNNA1 was shown not to bind to F-actin when assembled in the complex. Interacts with MUC1. Interacts with CAV1. Interacts with PTPRJ. Interacts with DSG1. Interacts with DSC1 and DSC2. Interacts with PKP2. Interacts with PKP3 (via N-terminus); the interaction is required for PKP3 localization to desmosome cell-cell junctions. Interacts with DSG4. May be phosphorylated by FER.

Its subcellular location is the cell junction. The protein localises to the adherens junction. The protein resides in the desmosome. It is found in the cytoplasm. It localises to the cytoskeleton. Its subcellular location is the cell membrane. The protein localises to the nucleus. Common junctional plaque protein. The membrane-associated plaques are architectural elements in an important strategic position to influence the arrangement and function of both the cytoskeleton and the cells within the tissue. The presence of plakoglobin in both the desmosomes and in the intermediate junctions suggests that it plays a central role in the structure and function of submembranous plaques. Acts as a substrate for VE-PTP and is required by it to stimulate VE-cadherin function in endothelial cells. Can replace beta-catenin in E-cadherin/catenin adhesion complexes which are proposed to couple cadherins to the actin cytoskeleton. The chain is Junction plakoglobin from Sus scrofa (Pig).